A 488-amino-acid chain; its full sequence is Malonate-semialdehyde dehydrogenase (488 aa).

Residues Ala150, Phe152, Lys176, Glu179, Arg180, Ser229, and Thr251 each contribute to the NAD(+) site. Cys284 acts as the Nucleophile in catalysis. Glu382 serves as a coordination point for NAD(+).

This sequence belongs to the aldehyde dehydrogenase family. IolA subfamily. As to quaternary structure, homotetramer.

The enzyme catalyses 3-oxopropanoate + NAD(+) + CoA + H2O = hydrogencarbonate + acetyl-CoA + NADH + H(+). The catalysed reaction is 2-methyl-3-oxopropanoate + NAD(+) + CoA + H2O = propanoyl-CoA + hydrogencarbonate + NADH + H(+). It functions in the pathway polyol metabolism; myo-inositol degradation into acetyl-CoA; acetyl-CoA from myo-inositol: step 7/7. Its function is as follows. Catalyzes the oxidation of malonate semialdehyde (MSA) and methylmalonate semialdehyde (MMSA) into acetyl-CoA and propanoyl-CoA, respectively. Is involved in a myo-inositol catabolic pathway. Bicarbonate, and not CO2, is the end-product of the enzymatic reaction. The polypeptide is Malonate-semialdehyde dehydrogenase (Listeria monocytogenes serotype 4a (strain HCC23)).